We begin with the raw amino-acid sequence, 49 residues long: Light-harvesting protein B800/850/890 alpha-3 chain (49 aa).

Over 1–14 (MNQARIWLVVKPSV) the chain is Cytoplasmic. Residues 15–35 (GLPLLLGVVLLIALLVHGAIL) traverse the membrane as a helical segment. His31 contributes to the a bacteriochlorophyll binding site. The Periplasmic segment spans residues 36–49 (TNTSWYPTYFEGNW).

The protein belongs to the antenna complex alpha subunit family. In terms of assembly, the core complex is formed by different alpha and beta chains, binding bacteriochlorophyll molecules, and arranged most probably in tetrameric structures disposed around the reaction center. The non-pigmented gamma chains may constitute additional components.

It is found in the cell inner membrane. Its function is as follows. Antenna complexes are light-harvesting systems, which transfer the excitation energy to the reaction centers. The chain is Light-harvesting protein B800/850/890 alpha-3 chain from Halorhodospira halophila (strain DSM 244 / SL1) (Ectothiorhodospira halophila (strain DSM 244 / SL1)).